A 476-amino-acid chain; its full sequence is Ribulose bisphosphate carboxylase large chain (476 aa).

Residues 1-2 (MS) constitute a propeptide that is removed on maturation. Pro3 is modified (N-acetylproline). N6,N6,N6-trimethyllysine is present on Lys14. Substrate is bound by residues Asn123 and Thr173. Catalysis depends on Lys175, which acts as the Proton acceptor. Lys177 contacts substrate. Residues Lys201, Asp203, and Glu204 each coordinate Mg(2+). Residue Lys201 is modified to N6-carboxylysine. His294 functions as the Proton acceptor in the catalytic mechanism. The substrate site is built by Arg295, His327, and Ser379.

The protein belongs to the RuBisCO large chain family. Type I subfamily. Heterohexadecamer of 8 large chains and 8 small chains; disulfide-linked. The disulfide link is formed within the large subunit homodimers. Mg(2+) serves as cofactor. The disulfide bond which can form in the large chain dimeric partners within the hexadecamer appears to be associated with oxidative stress and protein turnover.

The protein localises to the plastid. It is found in the chloroplast. The catalysed reaction is 2 (2R)-3-phosphoglycerate + 2 H(+) = D-ribulose 1,5-bisphosphate + CO2 + H2O. It catalyses the reaction D-ribulose 1,5-bisphosphate + O2 = 2-phosphoglycolate + (2R)-3-phosphoglycerate + 2 H(+). RuBisCO catalyzes two reactions: the carboxylation of D-ribulose 1,5-bisphosphate, the primary event in carbon dioxide fixation, as well as the oxidative fragmentation of the pentose substrate in the photorespiration process. Both reactions occur simultaneously and in competition at the same active site. This Brachypodium distachyon (Purple false brome) protein is Ribulose bisphosphate carboxylase large chain.